The following is a 375-amino-acid chain: Glucokinase 1 (375 aa).

Residue 25–30 coordinates ATP; the sequence is CDVGGS.

The protein belongs to the bacterial glucokinase family. Monomer. Post-translationally, the N-terminus is blocked.

The enzyme catalyses D-glucose + ATP = D-glucose 6-phosphate + ADP + H(+). This chain is Glucokinase 1 (GK1), found in Trichomonas vaginalis.